The chain runs to 234 residues: NLP effector protein Pc576423 (234 aa).

The signal sequence occupies residues 1 to 18 (MNLRAIAVTFATFAGANA). 2 N-linked (GlcNAc...) asparagine glycosylation sites follow: asparagine 35 and asparagine 66. The Hepta-peptide GHRHDWE motif motif lies at 119–125 (GHRHDWE).

It belongs to the Necrosis inducing protein (NPP1) family.

The protein resides in the secreted. Secreted effector that contributes strongly to virulence during infection by P.capsici. The chain is NLP effector protein Pc576423 from Phytophthora capsici.